A 228-amino-acid polypeptide reads, in one-letter code: Putative NAC domain-containing protein 61 (228 aa).

Positions 5–156 (LSVGFRFYPT…KSGSSRAFDR (152 aa)) constitute an NAC domain. Disordered regions lie at residues 77–96 (ARGG…ATGS) and 166–197 (RNLP…QVDL). The span at 80 to 89 (GRPSRTTGSG) shows a compositional bias: low complexity. Over residues 168 to 193 (LPSNGVETSSRATISTSPETSHSGGN) the composition is skewed to polar residues.

It is found in the nucleus. The sequence is that of Putative NAC domain-containing protein 61 (NAC061) from Arabidopsis thaliana (Mouse-ear cress).